We begin with the raw amino-acid sequence, 104 residues long: Phosphoribosyl-ATP pyrophosphatase (104 aa).

This sequence belongs to the PRA-PH family.

It localises to the cytoplasm. The enzyme catalyses 1-(5-phospho-beta-D-ribosyl)-ATP + H2O = 1-(5-phospho-beta-D-ribosyl)-5'-AMP + diphosphate + H(+). Its pathway is amino-acid biosynthesis; L-histidine biosynthesis; L-histidine from 5-phospho-alpha-D-ribose 1-diphosphate: step 2/9. The polypeptide is Phosphoribosyl-ATP pyrophosphatase (hisE) (Methanosarcina acetivorans (strain ATCC 35395 / DSM 2834 / JCM 12185 / C2A)).